The primary structure comprises 108 residues: Movement protein (108 aa).

The tract at residues 1–25 (MDASSQYSALPYPQPPRVPSAAPSA) is disordered. The chain crosses the membrane as a helical span at residues 35-55 (EIVIFTFVSVLALYLLWLWVL). The segment at 73–108 (LIFGPGERPPVASADGSRPVPDPSPPVRRDLDLSRV) is disordered. A compositionally biased stretch (basic and acidic residues) spans 99 to 108 (VRRDLDLSRV).

Belongs to the mastrevirus movement protein family. Interacts with the capsid protein (CP). Part of a MP-CP-viral DNA complex.

The protein localises to the host membrane. In terms of biological role, involved in the viral transport within, and between cells. This chain is Movement protein, found in Megathyrsus maximus (PanSV).